The primary structure comprises 872 residues: Alanine--tRNA ligase (872 aa).

Zn(2+) contacts are provided by His-567, His-571, Cys-669, and His-673.

It belongs to the class-II aminoacyl-tRNA synthetase family. It depends on Zn(2+) as a cofactor.

It is found in the cytoplasm. It carries out the reaction tRNA(Ala) + L-alanine + ATP = L-alanyl-tRNA(Ala) + AMP + diphosphate. Catalyzes the attachment of alanine to tRNA(Ala) in a two-step reaction: alanine is first activated by ATP to form Ala-AMP and then transferred to the acceptor end of tRNA(Ala). Also edits incorrectly charged Ser-tRNA(Ala) and Gly-tRNA(Ala) via its editing domain. The sequence is that of Alanine--tRNA ligase from Streptococcus agalactiae serotype Ia (strain ATCC 27591 / A909 / CDC SS700).